The chain runs to 190 residues: DKRTDSDFSPKPTIFLPSAAETNLHKAGTYLCLLEKFFPKVIRVYWKEKDGEKILESQEGNTIKTNDRYMKFSWLTVTEDSMAKEHSCIVKHENNKRGVDQEILFPPIGKAFTTINVNPRDSVLRHENVNNATDLEDCMKGRKDMLQLQVTTTYAFYTYLILFFKSMVHLAFVVFCLFRRAAMSCDDQRS.

The tract at residues 1–157 (DKRTDSDFSP…LQVTTTYAFY (157 aa)) is c region. Residues 158 to 178 (TYLILFFKSMVHLAFVVFCLF) form a helical membrane-spanning segment. Topologically, residues 179 to 190 (RRAAMSCDDQRS) are cytoplasmic.

It is found in the membrane. This Mus musculus (Mouse) protein is T-cell receptor gamma chain C region 5/10-13.